Consider the following 369-residue polypeptide: tRNA 2-selenouridine synthase (369 aa).

In terms of domain architecture, Rhodanese spans 15-138 (FIAGQPLIDL…MRQYLIGVIE (124 aa)). Cys98 serves as the catalytic S-selanylcysteine intermediate.

This sequence belongs to the SelU family. As to quaternary structure, monomer.

The catalysed reaction is 5-methylaminomethyl-2-thiouridine(34) in tRNA + selenophosphate + (2E)-geranyl diphosphate + H2O + H(+) = 5-methylaminomethyl-2-selenouridine(34) in tRNA + (2E)-thiogeraniol + phosphate + diphosphate. The enzyme catalyses 5-methylaminomethyl-2-thiouridine(34) in tRNA + (2E)-geranyl diphosphate = 5-methylaminomethyl-S-(2E)-geranyl-thiouridine(34) in tRNA + diphosphate. It catalyses the reaction 5-methylaminomethyl-S-(2E)-geranyl-thiouridine(34) in tRNA + selenophosphate + H(+) = 5-methylaminomethyl-2-(Se-phospho)selenouridine(34) in tRNA + (2E)-thiogeraniol. It carries out the reaction 5-methylaminomethyl-2-(Se-phospho)selenouridine(34) in tRNA + H2O = 5-methylaminomethyl-2-selenouridine(34) in tRNA + phosphate. Functionally, involved in the post-transcriptional modification of the uridine at the wobble position (U34) of tRNA(Lys), tRNA(Glu) and tRNA(Gln). Catalyzes the conversion of 2-thiouridine (S2U-RNA) to 2-selenouridine (Se2U-RNA). Acts in a two-step process involving geranylation of 2-thiouridine (S2U) to S-geranyl-2-thiouridine (geS2U) and subsequent selenation of the latter derivative to 2-selenouridine (Se2U) in the tRNA chain. The chain is tRNA 2-selenouridine synthase from Shewanella sp. (strain MR-7).